Reading from the N-terminus, the 244-residue chain is Nicotinamidase 1 (244 aa).

The protein belongs to the isochorismatase family. As to expression, expressed in roots and stems, and at lower levels in flowers, siliques and leaves.

It catalyses the reaction nicotinamide + H2O = nicotinate + NH4(+). It functions in the pathway cofactor biosynthesis; nicotinate biosynthesis; nicotinate from nicotinamide: step 1/1. Functionally, catalyzes the deamidation of nicotinamide, an early step in the NAD(+) salvage pathway. Prevents the accumulation of intracellular nicotinamide, a known inhibitor of poly(ADP-ribose) polymerases (PARP enzymes). The polypeptide is Nicotinamidase 1 (Arabidopsis thaliana (Mouse-ear cress)).